The sequence spans 37 residues: Large ribosomal subunit protein bL36 (37 aa).

The protein belongs to the bacterial ribosomal protein bL36 family.

This is Large ribosomal subunit protein bL36 from Mycoplasma genitalium (strain ATCC 33530 / DSM 19775 / NCTC 10195 / G37) (Mycoplasmoides genitalium).